The chain runs to 108 residues: Integration host factor subunit alpha (108 aa).

The protein belongs to the bacterial histone-like protein family. In terms of assembly, heterodimer of an alpha and a beta chain.

This protein is one of the two subunits of integration host factor, a specific DNA-binding protein that functions in genetic recombination as well as in transcriptional and translational control. The protein is Integration host factor subunit alpha of Methylorubrum extorquens (strain CM4 / NCIMB 13688) (Methylobacterium extorquens).